Here is a 297-residue protein sequence, read N- to C-terminus: N-acetylmuramic acid 6-phosphate etherase (297 aa).

The region spanning 56–219 (AIEAFNKGGR…STISMIGIGK (164 aa)) is the SIS domain. The Proton donor role is filled by glutamate 84. Glutamate 115 is an active-site residue.

Belongs to the GCKR-like family. MurNAc-6-P etherase subfamily. In terms of assembly, homodimer.

It catalyses the reaction N-acetyl-D-muramate 6-phosphate + H2O = N-acetyl-D-glucosamine 6-phosphate + (R)-lactate. It functions in the pathway amino-sugar metabolism; N-acetylmuramate degradation. Functionally, specifically catalyzes the cleavage of the D-lactyl ether substituent of MurNAc 6-phosphate, producing GlcNAc 6-phosphate and D-lactate. The protein is N-acetylmuramic acid 6-phosphate etherase of Lactococcus lactis subsp. cremoris (strain MG1363).